Here is a 212-residue protein sequence, read N- to C-terminus: ATP phosphoribosyltransferase (212 aa).

Belongs to the ATP phosphoribosyltransferase family. Short subfamily. As to quaternary structure, heteromultimer composed of HisG and HisZ subunits.

It is found in the cytoplasm. The enzyme catalyses 1-(5-phospho-beta-D-ribosyl)-ATP + diphosphate = 5-phospho-alpha-D-ribose 1-diphosphate + ATP. Its pathway is amino-acid biosynthesis; L-histidine biosynthesis; L-histidine from 5-phospho-alpha-D-ribose 1-diphosphate: step 1/9. Functionally, catalyzes the condensation of ATP and 5-phosphoribose 1-diphosphate to form N'-(5'-phosphoribosyl)-ATP (PR-ATP). Has a crucial role in the pathway because the rate of histidine biosynthesis seems to be controlled primarily by regulation of HisG enzymatic activity. This chain is ATP phosphoribosyltransferase, found in Clostridium botulinum (strain ATCC 19397 / Type A).